Reading from the N-terminus, the 1235-residue chain is High-affinity potassium transport protein (1235 aa).

Ser-15 carries the phosphoserine modification. 2 helical membrane passes run 49-70 (SFIA…ILLY) and 78-98 (IDTL…TVDI). Asn-100 is a glycosylation site (N-linked (GlcNAc...) asparagine). The helical transmembrane segment at 107–127 (IVLYIVCCISTPIAVHSCLAF) threads the bilayer. Disordered stretches follow at residues 161–310 (LTAR…SPAD), 323–344 (EATA…GTRY), 361–441 (KIKI…TKPP), and 488–565 (RLST…HQLQ). Residues 164–179 (RTMTKNRTGTQRTSYP) show a composition bias toward polar residues. Residue Asn-169 is glycosylated (N-linked (GlcNAc...) asparagine). The segment covering 198 to 217 (VNRDEQDSVHSDQNSHDISR) has biased composition (basic and acidic residues). Over residues 219-232 (SSNNNTNHNGSSGS) the composition is skewed to low complexity. N-linked (GlcNAc...) asparagine glycosylation is found at Asn-222 and Asn-227. A compositionally biased stretch (acidic residues) spans 237-247 (VKEDETDDNGE). The span at 248–274 (YQENNSYSTVGSSSNTVADESLNQKPK) shows a compositional bias: polar residues. The N-linked (GlcNAc...) asparagine glycan is linked to Asn-251. 2 N-linked (GlcNAc...) asparagine glycosylation sites follow: Asn-369 and Asn-383. Composition is skewed to polar residues over residues 370 to 415 (ESNT…SNSG) and 490 to 502 (STGS…SNNV). Ser-414 bears the Phosphoserine mark. Asn-497, Asn-501, and Asn-532 each carry an N-linked (GlcNAc...) asparagine glycan. Residues 510–539 (DMDDDDDDDDNDGDNNEEYFADNESGDEDE) are compositionally biased toward acidic residues. A Phosphoserine modification is found at Ser-534. The span at 540–563 (RVQQSEPHSDSELKSHQQQQEKHQ) shows a compositional bias: basic and acidic residues. N-linked (GlcNAc...) asparagine glycans are attached at residues Asn-580 and Asn-677. The tract at residues 671–706 (HDGSHKNGSEEASSDSNENIYSTNGGSDHNGLNNYP) is disordered. A compositionally biased stretch (polar residues) spans 680 to 706 (EEASSDSNENIYSTNGGSDHNGLNNYP). A run of 5 helical transmembrane segments spans residues 778–800 (ILVV…WIIL), 813–834 (VSPT…GLTL), 838–858 (SMMS…FIII), 862–882 (GFPI…PDLS), and 898–918 (CFTL…LAGL). An N-linked (GlcNAc...) asparagine glycan is attached at Asn-919. The next 2 membrane-spanning stretches (helical) occupy residues 923–943 (WILF…SKGY) and 971–991 (SIQV…AISI). The disordered stretch occupies residues 1003–1063 (GLYGDMGGEP…KKKKKTENPN (61 aa)). Over residues 1010–1031 (GEPEDTDTEDDGNDEDDDEENE) the composition is skewed to acidic residues. N-linked (GlcNAc...) asparagine glycosylation is present at Asn-1030. The span at 1036–1049 (QSSQRSSSNNNNNN) shows a compositional bias: low complexity. Transmembrane regions (helical) follow at residues 1078–1098 (QLSF…ICEG) and 1111–1131 (IFAI…SLGY). N-linked (GlcNAc...) asparagine glycosylation occurs at Asn-1135.

The protein belongs to the TrkH potassium transport family.

Its subcellular location is the membrane. Its function is as follows. This protein is required for high-affinity potassium transport. This is High-affinity potassium transport protein (TRK1) from Saccharomyces cerevisiae (strain ATCC 204508 / S288c) (Baker's yeast).